The primary structure comprises 598 residues: Elongation factor 4 (598 aa).

The tr-type G domain occupies 2 to 184 (TKIRNFSIIA…AVVDRIPPPS (183 aa)). Residues 14–19 (DHGKST) and 131–134 (NKID) contribute to the GTP site.

It belongs to the TRAFAC class translation factor GTPase superfamily. Classic translation factor GTPase family. LepA subfamily.

Its subcellular location is the cell inner membrane. The catalysed reaction is GTP + H2O = GDP + phosphate + H(+). Its function is as follows. Required for accurate and efficient protein synthesis under certain stress conditions. May act as a fidelity factor of the translation reaction, by catalyzing a one-codon backward translocation of tRNAs on improperly translocated ribosomes. Back-translocation proceeds from a post-translocation (POST) complex to a pre-translocation (PRE) complex, thus giving elongation factor G a second chance to translocate the tRNAs correctly. Binds to ribosomes in a GTP-dependent manner. The sequence is that of Elongation factor 4 from Syntrophobacter fumaroxidans (strain DSM 10017 / MPOB).